Reading from the N-terminus, the 514-residue chain is MSSNKKPMVLVILDGYGHREEQQDNAILNAKTPVMDRLWQQQPHQLIAASGLDVGLPDGQMGNSEVGHVNLGAGRIVYQDLTRLDKEIKEGDFFANPTLTAAVDKAVQAGKAVHIMGLLSPGGVHSHEDHILAMIELASQRGAKAVYLHAFLDGRDTPPRSAEASLQRFSDAFAKLGTGRIASLIGRYYAMDRDNRWDRVQLAYDLLTQAKGDYVTDNAVGALQAAYERGENDEFVKPTVLQAAGEAKAELHDGDALIFMNFRADRARQIVRSFVNADFDGFPRAKIINFGDFVMLTEYAADIKAPCAYPPASLSNTFGEWLMKHDKTQLRISETEKYAHVTFFFNGGVEEPFTGEDRVLINSPKVATYDLQPEMSAAELTDKLLAAIASGKYDAIICNYPNGDMVGHTGVYDAAVKAVETLDNCIAQVVEAVKAVDGQLLITADHGNAEQMRDPATGQAHTAHTSLPVPLIYIGKPASAVNGGKLSDIAPTMLALMGMEIPQEMTGKPLFIVE.

2 residues coordinate Mn(2+): Asp-14 and Ser-64. Residue Ser-64 is the Phosphoserine intermediate of the active site. Residues His-125, 155 to 156 (RD), Arg-187, Arg-193, 263 to 266 (RADR), and Lys-337 each bind substrate. Residues Asp-404, His-408, Asp-445, His-446, and His-464 each contribute to the Mn(2+) site.

Belongs to the BPG-independent phosphoglycerate mutase family. In terms of assembly, monomer. Requires Mn(2+) as cofactor.

The enzyme catalyses (2R)-2-phosphoglycerate = (2R)-3-phosphoglycerate. It participates in carbohydrate degradation; glycolysis; pyruvate from D-glyceraldehyde 3-phosphate: step 3/5. Its function is as follows. Catalyzes the interconversion of 2-phosphoglycerate and 3-phosphoglycerate. In Serratia proteamaculans (strain 568), this protein is 2,3-bisphosphoglycerate-independent phosphoglycerate mutase.